Here is a 457-residue protein sequence, read N- to C-terminus: Serine--tRNA ligase (457 aa).

252–254 (TAE) provides a ligand contact to L-serine. ATP-binding positions include 283–285 (RKE) and Val-299. Residue Glu-306 participates in L-serine binding. 370–373 (EMVS) contacts ATP. Thr-406 is a binding site for L-serine.

Belongs to the class-II aminoacyl-tRNA synthetase family. Type-1 seryl-tRNA synthetase subfamily. Homodimer. The tRNA molecule binds across the dimer.

It localises to the cytoplasm. The enzyme catalyses tRNA(Ser) + L-serine + ATP = L-seryl-tRNA(Ser) + AMP + diphosphate + H(+). It catalyses the reaction tRNA(Sec) + L-serine + ATP = L-seryl-tRNA(Sec) + AMP + diphosphate + H(+). The protein operates within aminoacyl-tRNA biosynthesis; selenocysteinyl-tRNA(Sec) biosynthesis; L-seryl-tRNA(Sec) from L-serine and tRNA(Sec): step 1/1. Its function is as follows. Catalyzes the attachment of serine to tRNA(Ser). Is also able to aminoacylate tRNA(Sec) with serine, to form the misacylated tRNA L-seryl-tRNA(Sec), which will be further converted into selenocysteinyl-tRNA(Sec). The chain is Serine--tRNA ligase from Saccharolobus solfataricus (strain ATCC 35092 / DSM 1617 / JCM 11322 / P2) (Sulfolobus solfataricus).